We begin with the raw amino-acid sequence, 424 residues long: CUGBP Elav-like family member 4 (424 aa).

Residues 8 to 27 (VANGQPDNSSLSSNPTGHMN) are disordered. Positions 9–24 (ANGQPDNSSLSSNPTG) are enriched in polar residues. RRM domains lie at 47 to 128 (IKLF…PADS) and 342 to 417 (PQPP…LKRP).

Belongs to the CELF/BRUNOL family.

Its subcellular location is the nucleus. The protein resides in the cytoplasm. Functionally, RNA-binding protein that may be implicated in the regulation of pre-mRNA alternative splicing. In Xenopus tropicalis (Western clawed frog), this protein is CUGBP Elav-like family member 4 (celf4).